A 411-amino-acid chain; its full sequence is Phospholipase ABHD3 (411 aa).

Residues 25–45 (VGFFGSGVGLSLILGFSVAYA) form a helical; Signal-anchor for type II membrane protein membrane-spanning segment. Residues 140–233 (PTILLLPGLT…MLLLNYLGKI (94 aa)) enclose the AB hydrolase-1 domain. Catalysis depends on charge relay system residues Ser220, Asp346, and His375.

The protein belongs to the AB hydrolase superfamily. AB hydrolase 4 family. In terms of tissue distribution, widely expressed with higher expression in liver.

The protein localises to the membrane. It catalyses the reaction a 1,2-diacyl-sn-glycero-3-phosphocholine + H2O = a 1-acyl-sn-glycero-3-phosphocholine + a fatty acid + H(+). The catalysed reaction is a 1,2-diacyl-sn-glycero-3-phosphocholine + H2O = a 2-acyl-sn-glycero-3-phosphocholine + a fatty acid + H(+). It carries out the reaction 1-tetradecanoyl-2-(9Z,12Z-octadecadienoyl)-sn-glycero-3-phosphocholine + H2O = 2-(9Z,12Z-octadecadienoyl)-sn-glycero-3-phosphocholine + tetradecanoate + H(+). The enzyme catalyses 1-tetradecanoyl-2-(9Z,12Z-octadecadienoyl)-sn-glycero-3-phosphocholine + H2O = 1-tetradecanoyl-sn-glycero-3-phosphocholine + (9Z,12Z)-octadecadienoate + H(+). It catalyses the reaction 1-tetradecanoyl-2-(5Z,8Z,11Z,14Z-eicosatetraenoyl)-sn-glycero-3-phosphocholine + H2O = 2-(5Z,8Z,11Z,14Z)-eicosatetraenoyl-sn-glycero-3-phosphocholine + tetradecanoate + H(+). The catalysed reaction is 1-tetradecanoyl-2-(4Z,7Z,10Z,13Z,16Z,19Z-docosahexaenoyl)-sn-glycero-3-phosphocholine + H2O = 2-(4Z,7Z,10Z,13Z,16Z,19Z-docosahexaenoyl)-sn-glycero-3-phosphocholine + tetradecanoate + H(+). It carries out the reaction 1,2-ditetradecanoyl-sn-glycero-3-phosphocholine + H2O = 2-tetradecanoyl-sn-glycero-3-phosphocholine + tetradecanoate + H(+). The enzyme catalyses 1-octadecanoyl-2-acetyl-sn-glycero-3-phosphocholine + H2O = 1-octadecanoyl-sn-glycero-3-phosphocholine + acetate + H(+). It catalyses the reaction 1,2-ditetradecanoyl-sn-glycero-3-phosphocholine + H2O = 1-tetradecanoyl-sn-glycero-3-phosphocholine + tetradecanoate + H(+). The catalysed reaction is 1-octadecanoyl-2-pentanoyl-sn-glycero-3-phosphocholine + H2O = pentanoate + 1-octadecanoyl-sn-glycero-3-phosphocholine + H(+). It carries out the reaction 1-octadecanoyl-2-hexanoyl-sn-glycero-3-phosphocholine + H2O = hexanoate + 1-octadecanoyl-sn-glycero-3-phosphocholine + H(+). The enzyme catalyses 1-octadecanoyl-2-octanoyl-sn-glycero-3-phosphocholine + H2O = 1-octadecanoyl-sn-glycero-3-phosphocholine + octanoate + H(+). It catalyses the reaction 1-octadecanoyl-2-nonanoyl-sn-glycero-3-phosphocholine + H2O = nonanoate + 1-octadecanoyl-sn-glycero-3-phosphocholine + H(+). The catalysed reaction is 1-O-hexadecyl-2-nonadioyl-sn-glycero-3-phosphocholine + H2O = nonanedioate + 1-O-hexadecyl-sn-glycero-3-phosphocholine + H(+). It carries out the reaction 1-hexadecanoyl-2-nonadioyl-sn-glycero-3-phosphocholine + H2O = nonanedioate + 1-hexadecanoyl-sn-glycero-3-phosphocholine + H(+). The enzyme catalyses 1-hexadecanoyl-2-(9-oxononanoyl)-sn-glycero-3-phosphocholine + H2O = 9-oxononanoate + 1-hexadecanoyl-sn-glycero-3-phosphocholine + H(+). It catalyses the reaction 1-hexadecanoyl-2-(5-oxopentanoyl)-sn-glycero-3-phosphocholine + H2O = 5-oxopentanoate + 1-hexadecanoyl-sn-glycero-3-phosphocholine + H(+). The catalysed reaction is 1-hexadecanoyl-2-glutaroyl-sn-glycero-3-phosphocholine + H2O = glutarate + 1-hexadecanoyl-sn-glycero-3-phosphocholine + H(+). It carries out the reaction 1-O-hexadecyl-2-acetyl-sn-glycero-3-phosphocholine + H2O = 1-O-hexadecyl-sn-glycero-3-phosphocholine + acetate + H(+). Functionally, phospholipase that may play a role in phospholipids remodeling. May selectively cleave myristate (C14)-containing phosphatidylcholines through its predominant phospholipase 1 activity, cleaving preferentially acyl groups in sn1 position. In parallel, may have a minor phospholipase 2 activity acting on acyl groups in position sn2. In addition to (C14)-containing phosphatidylcholines, may also act on other medium-chain-containing and oxidatively truncated phospholipids. This Mus musculus (Mouse) protein is Phospholipase ABHD3.